We begin with the raw amino-acid sequence, 363 residues long: Two-pore potassium channel 1 (363 aa).

A disordered region spans residues Met-1–Pro-61. At Met-1–Arg-78 the chain is on the cytoplasmic side. Residues Ser-31–Ser-42 show a composition bias toward basic residues. The chain crosses the membrane as a helical span at residues Val-79–Asp-99. Positions Asp-111 to Pro-130 form an intramembrane region, pore-forming. Residues Leu-137–Ala-157 form a helical membrane-spanning segment. The Cytoplasmic segment spans residues Ala-158 to Cys-197. Residues Tyr-198–Val-218 form a helical membrane-spanning segment. The pore-forming intramembrane region spans Ser-225–Phe-244. The helical transmembrane segment at Leu-251 to Val-271 threads the bilayer. The Cytoplasmic segment spans residues Ala-272–Arg-363. EF-hand domains follow at residues Leu-288 to Lys-323 and Lys-327 to Gln-362. The Endoplasmic reticulum release signal motif lies at Asp-296 to Glu-298. Residues Asp-301, Asp-303, Asp-305, Glu-312, Asp-340, Asp-342, Ser-344, Thr-346, and Asp-351 each coordinate Ca(2+).

Belongs to the two pore domain potassium channel (TC 1.A.1.7) family. Homodimer. Interacts with GRF1 and GRF6, but only GRF6 modulates the channel activity. In terms of processing, phosphorylation at Ser-42 increases and stabilizes the interaction with 14-3-3 proteins. In terms of tissue distribution, detected in mesophyll cells, guard cells and vascular tissues of the leaves. Expressed in the hilum, where the funiculus is attached during fruit maturation and in the embryo. Also expressed at a lower level in seedlings, root tips and elongation zones, and flowers. Could be detected in mitotically active tissues.

It is found in the vacuole membrane. Its activity is regulated as follows. Could be activated by protein kinase C. Strongly induced by calcium. Blocked by barium, tetraethylammonium (TEA), quinine and quinidine. Its function is as follows. Voltage-independent, large conductance and potassium-selective tonoplast ion channel. Regulated by cytoplasmic calcium and pH. Does not mediate slow-vacuolar (SV) ionic currents, but essential to establish VK currents. Has some permeability for Rb(+) and NH(4)(+), but none for Na(+), Cs(+) or Li(+). Involved in intracellular K(+) redistribution and/or K(+) retranslocation between different tissues. This Arabidopsis thaliana (Mouse-ear cress) protein is Two-pore potassium channel 1 (TPK1).